Reading from the N-terminus, the 294-residue chain is 4-hydroxy-tetrahydrodipicolinate synthase (294 aa).

Threonine 47 is a binding site for pyruvate. Catalysis depends on tyrosine 135, which acts as the Proton donor/acceptor. Lysine 163 acts as the Schiff-base intermediate with substrate in catalysis. Valine 205 serves as a coordination point for pyruvate.

Belongs to the DapA family. As to quaternary structure, homotetramer; dimer of dimers.

It is found in the cytoplasm. It catalyses the reaction L-aspartate 4-semialdehyde + pyruvate = (2S,4S)-4-hydroxy-2,3,4,5-tetrahydrodipicolinate + H2O + H(+). It functions in the pathway amino-acid biosynthesis; L-lysine biosynthesis via DAP pathway; (S)-tetrahydrodipicolinate from L-aspartate: step 3/4. Catalyzes the condensation of (S)-aspartate-beta-semialdehyde [(S)-ASA] and pyruvate to 4-hydroxy-tetrahydrodipicolinate (HTPA). This is 4-hydroxy-tetrahydrodipicolinate synthase from Rickettsia bellii (strain RML369-C).